Here is an 832-residue protein sequence, read N- to C-terminus: Regulator of drug sensitivity 1 (832 aa).

The zn(2)-C6 fungal-type DNA-binding region spans 15–42; that stretch reads CLQCKKIKRKCDKLRPACSRCQQNSLQC.

Its subcellular location is the nucleus. In terms of biological role, zinc cluster transcription factor involved in resistance to cycloheximide. This is Regulator of drug sensitivity 1 (RDS1) from Saccharomyces cerevisiae (strain ATCC 204508 / S288c) (Baker's yeast).